A 27-amino-acid chain; its full sequence is Delta-conotoxin TxVIB (27 aa).

3 cysteine pairs are disulfide-bonded: cysteine 2/cysteine 17, cysteine 9/cysteine 21, and cysteine 16/cysteine 26.

The protein belongs to the conotoxin O1 superfamily. Expressed by the venom duct.

The protein resides in the secreted. Its function is as follows. Delta-conotoxins bind to site 6 of voltage-gated sodium channels (Nav) and inhibit the inactivation process. Induces membrane depolarization and spontaneous repetitive firing of neurons. In Conus textile (Cloth-of-gold cone), this protein is Delta-conotoxin TxVIB.